Reading from the N-terminus, the 1101-residue chain is Type VI secretion system component TssM1 (1101 aa).

The chain crosses the membrane as a helical span at residues 371–391 (LTIGALSATALVVLAVTAVWI).

The protein localises to the cell inner membrane. In terms of biological role, core component of the type VI (T6SS) secretion system that plays a role in the release of toxins targeting both eukaryotic and prokaryotic species. Plays an essential role in stabilization of assembled TssK1 structure at a fixed perimembrane site. This chain is Type VI secretion system component TssM1, found in Pseudomonas aeruginosa (strain ATCC 15692 / DSM 22644 / CIP 104116 / JCM 14847 / LMG 12228 / 1C / PRS 101 / PAO1).